Reading from the N-terminus, the 120-residue chain is Large ribosomal subunit protein bL12 (120 aa).

Belongs to the bacterial ribosomal protein bL12 family. In terms of assembly, homodimer. Part of the ribosomal stalk of the 50S ribosomal subunit. Forms a multimeric L10(L12)X complex, where L10 forms an elongated spine to which 2 to 4 L12 dimers bind in a sequential fashion. Binds GTP-bound translation factors.

Functionally, forms part of the ribosomal stalk which helps the ribosome interact with GTP-bound translation factors. Is thus essential for accurate translation. The sequence is that of Large ribosomal subunit protein bL12 from Clostridium botulinum (strain Alaska E43 / Type E3).